The chain runs to 249 residues: Cytochrome c oxidase subunit 2 (249 aa).

Helical transmembrane passes span 40–60 and 81–101; these read NIMFYLLVILGLVSWMLYTIT and IIWTIFPAVVLLIIAFPSFIL. Cu cation contacts are provided by histidine 184, cysteine 219, glutamate 221, cysteine 223, histidine 227, and methionine 230. Glutamate 221 is a Mg(2+) binding site.

The protein belongs to the cytochrome c oxidase subunit 2 family. In terms of assembly, component of the cytochrome c oxidase (complex IV, CIV), a multisubunit enzyme composed of a catalytic core of 3 subunits and several supernumerary subunits. The complex exists as a monomer or a dimer and forms supercomplexes (SCs) in the inner mitochondrial membrane with ubiquinol-cytochrome c oxidoreductase (cytochrome b-c1 complex, complex III, CIII). It depends on Cu cation as a cofactor.

The protein resides in the mitochondrion inner membrane. It catalyses the reaction 4 Fe(II)-[cytochrome c] + O2 + 8 H(+)(in) = 4 Fe(III)-[cytochrome c] + 2 H2O + 4 H(+)(out). In terms of biological role, component of the cytochrome c oxidase, the last enzyme in the mitochondrial electron transport chain which drives oxidative phosphorylation. The respiratory chain contains 3 multisubunit complexes succinate dehydrogenase (complex II, CII), ubiquinol-cytochrome c oxidoreductase (cytochrome b-c1 complex, complex III, CIII) and cytochrome c oxidase (complex IV, CIV), that cooperate to transfer electrons derived from NADH and succinate to molecular oxygen, creating an electrochemical gradient over the inner membrane that drives transmembrane transport and the ATP synthase. Cytochrome c oxidase is the component of the respiratory chain that catalyzes the reduction of oxygen to water. Electrons originating from reduced cytochrome c in the intermembrane space (IMS) are transferred via the dinuclear copper A center (CU(A)) of subunit 2 and heme A of subunit 1 to the active site in subunit 1, a binuclear center (BNC) formed by heme A3 and copper B (CU(B)). The BNC reduces molecular oxygen to 2 water molecules using 4 electrons from cytochrome c in the IMS and 4 protons from the mitochondrial matrix. The sequence is that of Cytochrome c oxidase subunit 2 (COX2) from Vanderwaltozyma polyspora (strain ATCC 22028 / DSM 70294 / BCRC 21397 / CBS 2163 / NBRC 10782 / NRRL Y-8283 / UCD 57-17) (Kluyveromyces polysporus).